The sequence spans 551 residues: TRAF3-interacting JNK-activating modulator (551 aa).

Topologically, residues 1–526 are cytoplasmic; it reads MISPDPRPSP…QLPPRRQCGR (526 aa). Disordered regions lie at residues 73–95 and 140–178; these read LEEK…RPGQ and DHLS…IKND. Coiled coils occupy residues 240–436 and 464–506; these read DKLK…LLTK and WDLR…RKLQ. The chain crosses the membrane as a helical; Anchor for type IV membrane protein span at residues 527 to 544; the sequence is WLPVLMVVIAAALAVFLA. At 545-551 the chain is on the extracellular side; sequence NKDNLMI.

In terms of assembly, interacts (via its coiled-coil domain) with TRAF3 (via isoleucine zipper). Interacts with MAP2K1. Interacts with PPP2CA; this interaction targets PPP2CA to the lysosomes. Interacts with TLR4. Interacts with MAVS. Interacts with TBK1.

It localises to the cell membrane. Its subcellular location is the golgi apparatus membrane. The protein localises to the lysosome membrane. It is found in the mitochondrion outer membrane. Functionally, adapter protein that plays essential roles in both innate and adaptive immunity. Plays a crucial role in the regulation of thymocyte development. Mechanistically, mediates TCR-stimulated activation through recruiting MAP2K1/MEK1 to the Golgi and, thereby, facilitating the interaction of MAP2K1/MEK1 with its activator BRAF. Also plays an essential role in regulatory T-cell stability and function by recruiting the serine-threonine phosphatase catalytic subunit (PPP2CA) to the lysosome, thereby facilitating the interaction of PP2Ac with the mTORC1 component RPTOR and restricting glycolytic metabolism. Positively regulates TLR4 signaling activity in macrophage-mediated inflammation by acting as a molecular clamp to facilitate LPS-induced translocation of TLR4 to lipid rafts. In response to viral infection, facilitates the recruitment of TRAF3 to MAVS within mitochondria leading to IRF3 activation and interferon production. However, participates in the maintenance of immune homeostasis and the prevention of overzealous innate immunity by promoting 'Lys-48'-dependent ubiquitination of TBK1. This chain is TRAF3-interacting JNK-activating modulator (TRAF3IP3), found in Homo sapiens (Human).